The sequence spans 207 residues: Testis-expressed protein 35 (207 aa).

Residues 43–79 (RKGMTRELKNELREVREQLTEKMEEIKQIKDIMDKDF) adopt a coiled-coil conformation.

In terms of tissue distribution, testis-specific. Expressed during spermatogenesis.

Its subcellular location is the nucleus. This Mus musculus (Mouse) protein is Testis-expressed protein 35 (Tex35).